Here is a 673-residue protein sequence, read N- to C-terminus: DNA ligase (673 aa).

NAD(+)-binding positions include 33-37 (DSVYD), 82-83 (SL), and Glu117. Catalysis depends on Lys119, which acts as the N6-AMP-lysine intermediate. Arg140, Glu177, Lys295, and Lys319 together coordinate NAD(+). Positions 413, 416, 431, and 436 each coordinate Zn(2+). Residues 595 to 673 (AVSQVLAGKK…EAELLALDPK (79 aa)) form the BRCT domain.

It belongs to the NAD-dependent DNA ligase family. LigA subfamily. Mg(2+) serves as cofactor. It depends on Mn(2+) as a cofactor.

It carries out the reaction NAD(+) + (deoxyribonucleotide)n-3'-hydroxyl + 5'-phospho-(deoxyribonucleotide)m = (deoxyribonucleotide)n+m + AMP + beta-nicotinamide D-nucleotide.. Functionally, DNA ligase that catalyzes the formation of phosphodiester linkages between 5'-phosphoryl and 3'-hydroxyl groups in double-stranded DNA using NAD as a coenzyme and as the energy source for the reaction. It is essential for DNA replication and repair of damaged DNA. This is DNA ligase from Synechococcus sp. (strain JA-3-3Ab) (Cyanobacteria bacterium Yellowstone A-Prime).